Consider the following 89-residue polypeptide: Small ribosomal subunit protein uS15 (89 aa).

Residues 1–10 (MSITAERKAE) show a composition bias toward basic and acidic residues. Residues 1–24 (MSITAERKAEVIQGNANKAGDTGS) form a disordered region.

It belongs to the universal ribosomal protein uS15 family. As to quaternary structure, part of the 30S ribosomal subunit. Forms a bridge to the 50S subunit in the 70S ribosome, contacting the 23S rRNA.

Functionally, one of the primary rRNA binding proteins, it binds directly to 16S rRNA where it helps nucleate assembly of the platform of the 30S subunit by binding and bridging several RNA helices of the 16S rRNA. In terms of biological role, forms an intersubunit bridge (bridge B4) with the 23S rRNA of the 50S subunit in the ribosome. This is Small ribosomal subunit protein uS15 from Rhodopseudomonas palustris (strain BisB5).